The sequence spans 302 residues: Probable 5-dehydro-4-deoxyglucarate dehydratase (302 aa).

It belongs to the DapA family.

The enzyme catalyses 5-dehydro-4-deoxy-D-glucarate + H(+) = 2,5-dioxopentanoate + CO2 + H2O. It functions in the pathway carbohydrate acid metabolism; D-glucarate degradation; 2,5-dioxopentanoate from D-glucarate: step 2/2. This Rhizobium rhizogenes (strain K84 / ATCC BAA-868) (Agrobacterium radiobacter) protein is Probable 5-dehydro-4-deoxyglucarate dehydratase.